A 332-amino-acid chain; its full sequence is Cysteine and histidine-rich domain-containing protein 1 (332 aa).

An N-acetylalanine modification is found at A2. The tract at residues 2-77 (ALLCYNRGCG…KPPEPVKPEV (76 aa)) is interaction with PPP5C. 6 residues coordinate Zn(2+): C5, C10, C24, H27, C42, and C43. CHORD domains are found at residues 5–64 (CYNR…KGRH) and 157–216 (CKNG…TGKH). At T47 the chain carries Phosphothreonine. S51 is subject to Phosphoserine. C59, H64, C157, C162, C176, H179, C194, C195, C211, and H216 together coordinate Zn(2+). The disordered stretch occupies residues 62–82 (GRHNSEKPPEPVKPEVKTTEK). Over residues 64-82 (HNSEKPPEPVKPEVKTTEK) the composition is skewed to basic and acidic residues. An interaction with HSP90AA1 and HSP90AB1 region spans residues 65-316 (NSEKPPEPVK…AEPMQWASLE (252 aa)). Positions 227–316 (VVPCRHDWHQ…AEPMQWASLE (90 aa)) constitute a CS domain.

As to quaternary structure, interacts with HSP90AA1, HSP90AB1, PPP5C, ROCK1 and ROCK2.

In terms of biological role, regulates centrosome duplication, probably by inhibiting the kinase activity of ROCK2. Proposed to act as co-chaperone for HSP90. May play a role in the regulation of NOD1 via a HSP90 chaperone complex. In vitro, has intrinsic chaperone activity. This function may be achieved by inhibiting association of ROCK2 with NPM1. Plays a role in ensuring the localization of the tyrosine kinase receptor EGFR to the plasma membrane, and thus ensures the subsequent regulation of EGFR activity and EGF-induced actin cytoskeleton remodeling. Involved in stress response. Prevents tumorigenesis. This Bos taurus (Bovine) protein is Cysteine and histidine-rich domain-containing protein 1 (CHORDC1).